The following is a 508-amino-acid chain: uncharacterized protein (508 aa).

A helical transmembrane segment spans residues 7 to 29 (ALAIVLALILSLALPELLFQLYP).

It localises to the membrane. This is an uncharacterized protein from Archaeoglobus fulgidus (strain ATCC 49558 / DSM 4304 / JCM 9628 / NBRC 100126 / VC-16).